A 480-amino-acid chain; its full sequence is Carboxy-terminal processing protease CtpB (480 aa).

A signal peptide spans Met1–Ala23. One can recognise a PDZ domain in the interval Ser92–Pro182. The tract at residues Gly113 to Ala116 is peptide binding. Ser309 serves as the catalytic Nucleophile. Catalysis depends on charge relay system residues Lys334 and Gln338.

Belongs to the peptidase S41A family. In terms of assembly, homodimer. In terms of processing, is cleaved by SpoIVB in vitro and in vivo but this cleavage does not appear to be necessary for CtpB activation. CtpB can also cleave itself in vivo.

It localises to the forespore intermembrane space. The enzyme catalyses The enzyme shows specific recognition of a C-terminal tripeptide, Xaa-Yaa-Zaa, in which Xaa is preferably Ala or Leu, Yaa is preferably Ala or Tyr, and Zaa is preferably Ala, but then cleaves at a variable distance from the C-terminus. A typical cleavage is -Ala-Ala-|-Arg-Ala-Ala-Lys-Glu-Asn-Tyr-Ala-Leu-Ala-Ala.. Its activity is regulated as follows. Activated by peptide binding to the PDZ domain. Its function is as follows. Involved in the signal transduction pathway leading to the proteolytic activation of the mother cell transcription factor pro-sigma-K during sporulation. The signaling serine protease CtpB triggers pro-sigma-K processing by cleaving the pre-processed regulatory protein SpoIVFA and is necessary for the proper timing of sigma-K activation. This is Carboxy-terminal processing protease CtpB (ctpB) from Bacillus subtilis (strain 168).